We begin with the raw amino-acid sequence, 571 residues long: Glutamate--tRNA ligase (571 aa).

The 'HIGH' region motif lies at P110–S120.

This sequence belongs to the class-I aminoacyl-tRNA synthetase family. Glutamate--tRNA ligase type 2 subfamily.

It is found in the cytoplasm. The catalysed reaction is tRNA(Glu) + L-glutamate + ATP = L-glutamyl-tRNA(Glu) + AMP + diphosphate. Catalyzes the attachment of glutamate to tRNA(Glu) in a two-step reaction: glutamate is first activated by ATP to form Glu-AMP and then transferred to the acceptor end of tRNA(Glu). In Methanosarcina mazei (strain ATCC BAA-159 / DSM 3647 / Goe1 / Go1 / JCM 11833 / OCM 88) (Methanosarcina frisia), this protein is Glutamate--tRNA ligase.